Consider the following 112-residue polypeptide: Cell cycle protein GpsB (112 aa).

Positions 38–72 (IKDYEAFHKEFEQLKQQNARLKRELEEQKLAATQV) form a coiled coil.

The protein belongs to the GpsB family. As to quaternary structure, forms polymers through the coiled coil domains. Interacts with PBP1, MreC and EzrA.

It localises to the cytoplasm. Its function is as follows. Divisome component that associates with the complex late in its assembly, after the Z-ring is formed, and is dependent on DivIC and PBP2B for its recruitment to the divisome. Together with EzrA, is a key component of the system that regulates PBP1 localization during cell cycle progression. Its main role could be the removal of PBP1 from the cell pole after pole maturation is completed. Also contributes to the recruitment of PBP1 to the division complex. Not essential for septum formation. This Bacillus anthracis (strain A0248) protein is Cell cycle protein GpsB.